The following is a 367-amino-acid chain: MKLLTALSELISIFLFTTIFIFLARKVAIKIGLVDKPNFRKRHQGVIPLVGGISVFAGICFMFGLSDYYIPHLSLYLICAGVLVFVGAMDDRFDISVKIRAVVQAVIAVVMMVIAKLHLGSLGYIFGPWELVLGPFGYFLTLFAVWAAINAFNMVDGIDGLLGGLSSVSFAAMGLILWFDGQTSLAMWCFAMIAAILPYIMLNLGILGRRYKVFMGDAGSTLIGFTVIWLLLETTQGKTHSISPVTALWIIAIPLMDMVAIMYRRLRKGMSPFSPDRQHIHHLVMRAGFTSRQAFVLITLAAAILAGVGVTAEYSHFVPEWVMLVLFLLAFFLYGYCIKRAWKVARFIKRVKRRLRRQRKNRPNLTK.

9 helical membrane-spanning segments follow: residues 3-23 (LLTA…FIFL), 45-65 (GVIP…MFGL), 69-89 (YIPH…VGAM), 129-149 (WELV…WAAI), 158-178 (IDGL…LILW), 187-207 (MWCF…LGIL), 213-233 (VFMG…LLLE), 242-262 (ISPV…VAIM), and 318-338 (VPEW…GYCI).

It belongs to the glycosyltransferase 4 family. WecA subfamily. It depends on Mg(2+) as a cofactor. The cofactor is Mn(2+).

The protein resides in the cell inner membrane. It carries out the reaction di-trans,octa-cis-undecaprenyl phosphate + UDP-N-acetyl-alpha-D-glucosamine = N-acetyl-alpha-D-glucosaminyl-di-trans,octa-cis-undecaprenyl diphosphate + UMP. The protein operates within bacterial outer membrane biogenesis; LPS O-antigen biosynthesis. It functions in the pathway bacterial outer membrane biogenesis; enterobacterial common antigen biosynthesis. Its function is as follows. Catalyzes the transfer of the GlcNAc-1-phosphate moiety from UDP-GlcNAc onto the carrier lipid undecaprenyl phosphate (C55-P), yielding GlcNAc-pyrophosphoryl-undecaprenyl (GlcNAc-PP-C55). The polypeptide is Undecaprenyl-phosphate alpha-N-acetylglucosaminyl 1-phosphate transferase (Salmonella typhi).